A 213-amino-acid polypeptide reads, in one-letter code: NADH-quinone oxidoreductase subunit I (213 aa).

4Fe-4S ferredoxin-type domains are found at residues 74 to 103 (RFIE…METS) and 113 to 142 (GNYS…HGTE). Cys-83, Cys-86, Cys-89, Cys-93, Cys-122, Cys-125, Cys-128, and Cys-132 together coordinate [4Fe-4S] cluster.

Belongs to the complex I 23 kDa subunit family. NDH-1 is composed of 14 different subunits. Subunits NuoA, H, J, K, L, M, N constitute the membrane sector of the complex. The cofactor is [4Fe-4S] cluster.

It is found in the cell inner membrane. It catalyses the reaction a quinone + NADH + 5 H(+)(in) = a quinol + NAD(+) + 4 H(+)(out). In terms of biological role, NDH-1 shuttles electrons from NADH, via FMN and iron-sulfur (Fe-S) centers, to quinones in the respiratory chain. The immediate electron acceptor for the enzyme in this species is believed to be ubiquinone. Couples the redox reaction to proton translocation (for every two electrons transferred, four hydrogen ions are translocated across the cytoplasmic membrane), and thus conserves the redox energy in a proton gradient. The chain is NADH-quinone oxidoreductase subunit I from Campylobacter jejuni subsp. jejuni serotype O:6 (strain 81116 / NCTC 11828).